The sequence spans 445 residues: Methyl-CpG-binding domain protein 4-like protein (445 aa).

The active site involves aspartate 429.

In terms of tissue distribution, isoform 1 and isoform 4: Expressed in leaves and flowers, but not in roots or stems.

The protein resides in the nucleus. Monofunctional DNA glycosylase targeting U:G and T:G mispairs. Excises uracil derivatives and exhibits a preference for a CpG sequence context, irrespective of the methylation status of the complementary strand. The activity follows a biphasic kinetics, with an initial burst of product accumulation followed by a slower phase. Specifically binds its reaction product. Triggers the base excision repair (BER) pathway. This Arabidopsis thaliana (Mouse-ear cress) protein is Methyl-CpG-binding domain protein 4-like protein.